A 251-amino-acid chain; its full sequence is Ubiquinone biosynthesis O-methyltransferase (251 aa).

Residues Arg-36, Gly-61, Asp-82, and Ile-124 each coordinate S-adenosyl-L-methionine.

This sequence belongs to the methyltransferase superfamily. UbiG/COQ3 family.

The enzyme catalyses a 3-demethylubiquinol + S-adenosyl-L-methionine = a ubiquinol + S-adenosyl-L-homocysteine + H(+). It carries out the reaction a 3-(all-trans-polyprenyl)benzene-1,2-diol + S-adenosyl-L-methionine = a 2-methoxy-6-(all-trans-polyprenyl)phenol + S-adenosyl-L-homocysteine + H(+). The protein operates within cofactor biosynthesis; ubiquinone biosynthesis. Functionally, O-methyltransferase that catalyzes the 2 O-methylation steps in the ubiquinone biosynthetic pathway. This Rickettsia akari (strain Hartford) protein is Ubiquinone biosynthesis O-methyltransferase.